A 220-amino-acid chain; its full sequence is Claudin-22 (220 aa).

The Cytoplasmic portion of the chain corresponds to 1–10 (MALVFRTVAQ). Residues 11–30 (LAGVSLSLLGWVLSCLTNYL) traverse the membrane as a helical segment. Residues 31-81 (PHWKNLNLDLNEMENWTMGLWQTCVIQEEVGMQCKDFDSFLALPAELRVSR) lie on the Extracellular side of the membrane. Residues 82-102 (ILMFLSNGLGFLGLLVSGFGL) form a helical membrane-spanning segment. Residues 103–117 (DCLRIGESQRDLKRR) lie on the Cytoplasmic side of the membrane. The chain crosses the membrane as a helical span at residues 118–138 (LLILGGILSWASGVTALVPVS). Over 139-164 (WVAHKTVQEFWDENVPDFVPRWEFGE) the chain is Extracellular. The helical transmembrane segment at 165–185 (ALFLGWFAGLSLLLGGCLLHC) threads the bilayer. The Cytoplasmic segment spans residues 186–220 (AACSSHAPLASGHYAVAQTQDHHQELETRNTNLKH).

Belongs to the claudin family.

The protein localises to the cell junction. It localises to the tight junction. It is found in the cell membrane. In terms of biological role, plays a major role in tight junction-specific obliteration of the intercellular space, through calcium-independent cell-adhesion activity. The chain is Claudin-22 (CLDN22) from Homo sapiens (Human).